Reading from the N-terminus, the 270-residue chain is 4-hydroxy-tetrahydrodipicolinate reductase (270 aa).

NAD(+) is bound by residues 9–14 and Glu35; that span reads GAGGRM. Arg36 contributes to the NADP(+) binding site. Residues 99-101 and 123-126 contribute to the NAD(+) site; these read GTT and ASNY. Catalysis depends on His156, which acts as the Proton donor/acceptor. (S)-2,3,4,5-tetrahydrodipicolinate is bound at residue His157. The active-site Proton donor is Lys160. 166–167 is a binding site for (S)-2,3,4,5-tetrahydrodipicolinate; sequence GT.

The protein belongs to the DapB family.

The protein resides in the cytoplasm. The catalysed reaction is (S)-2,3,4,5-tetrahydrodipicolinate + NAD(+) + H2O = (2S,4S)-4-hydroxy-2,3,4,5-tetrahydrodipicolinate + NADH + H(+). It catalyses the reaction (S)-2,3,4,5-tetrahydrodipicolinate + NADP(+) + H2O = (2S,4S)-4-hydroxy-2,3,4,5-tetrahydrodipicolinate + NADPH + H(+). The protein operates within amino-acid biosynthesis; L-lysine biosynthesis via DAP pathway; (S)-tetrahydrodipicolinate from L-aspartate: step 4/4. Catalyzes the conversion of 4-hydroxy-tetrahydrodipicolinate (HTPA) to tetrahydrodipicolinate. This is 4-hydroxy-tetrahydrodipicolinate reductase from Mannheimia succiniciproducens (strain KCTC 0769BP / MBEL55E).